A 384-amino-acid chain; its full sequence is S-adenosylmethionine synthase (384 aa).

An ATP-binding site is contributed by His15. Asp17 contacts Mg(2+). Glu43 is a K(+) binding site. 2 residues coordinate L-methionine: Glu56 and Gln99. The flexible loop stretch occupies residues Gln99–Arg109. ATP is bound by residues Asp164 to Lys166, Arg230 to Phe231, Asp239, Arg245 to Lys246, Ala262, and Lys266. Residue Asp239 coordinates L-methionine. Position 270 (Lys270) interacts with L-methionine.

It belongs to the AdoMet synthase family. As to quaternary structure, homotetramer; dimer of dimers. The cofactor is Mg(2+). K(+) is required as a cofactor.

It is found in the cytoplasm. It carries out the reaction L-methionine + ATP + H2O = S-adenosyl-L-methionine + phosphate + diphosphate. Its pathway is amino-acid biosynthesis; S-adenosyl-L-methionine biosynthesis; S-adenosyl-L-methionine from L-methionine: step 1/1. Functionally, catalyzes the formation of S-adenosylmethionine (AdoMet) from methionine and ATP. The overall synthetic reaction is composed of two sequential steps, AdoMet formation and the subsequent tripolyphosphate hydrolysis which occurs prior to release of AdoMet from the enzyme. This is S-adenosylmethionine synthase from Escherichia coli (strain K12 / DH10B).